The following is a 64-amino-acid chain: Large ribosomal subunit protein uL30 (64 aa).

Belongs to the universal ribosomal protein uL30 family. In terms of assembly, part of the 50S ribosomal subunit.

The chain is Large ribosomal subunit protein uL30 from Syntrophus aciditrophicus (strain SB).